The primary structure comprises 725 residues: Catalase B (725 aa).

The first 15 residues, 1 to 15 (MRALSLASLIGIASA), serve as a signal peptide directing secretion. A propeptide spanning residues 16-27 (ACPYMTGELERR) is cleaved from the precursor. An N-linked (GlcNAc...) asparagine glycan is attached at Asn50. His101 is an active-site residue. Asn119 carries N-linked (GlcNAc...) asparagine glycosylation. Residue Asn174 is part of the active site. Tyr388 lines the heme pocket. N-linked (GlcNAc...) asparagine glycans are attached at residues Asn447, Asn550, and Asn645.

It belongs to the catalase family. As to quaternary structure, homotetramer. It depends on heme as a cofactor.

It is found in the secreted. The enzyme catalyses 2 H2O2 = O2 + 2 H2O. Its function is as follows. Occurs in almost all aerobically respiring organisms and serves to protect cells from the toxic effects of hydrogen peroxide through its degradation into water and oxygen. The protein is Catalase B (catB) of Aspergillus oryzae (strain ATCC 42149 / RIB 40) (Yellow koji mold).